Reading from the N-terminus, the 124-residue chain is Glycine cleavage system H protein (124 aa).

Residues 24–106 (TYTMGITDHA…YDDGWLVKFK (83 aa)) enclose the Lipoyl-binding domain. The residue at position 65 (lysine 65) is an N6-lipoyllysine.

Belongs to the GcvH family. In terms of assembly, the glycine cleavage system is composed of four proteins: P, T, L and H. (R)-lipoate is required as a cofactor.

In terms of biological role, the glycine cleavage system catalyzes the degradation of glycine. The H protein shuttles the methylamine group of glycine from the P protein to the T protein. The protein is Glycine cleavage system H protein of Ruthia magnifica subsp. Calyptogena magnifica.